Reading from the N-terminus, the 118-residue chain is Large ribosomal subunit protein bL20 (118 aa).

It belongs to the bacterial ribosomal protein bL20 family.

Binds directly to 23S ribosomal RNA and is necessary for the in vitro assembly process of the 50S ribosomal subunit. It is not involved in the protein synthesizing functions of that subunit. This chain is Large ribosomal subunit protein bL20, found in Caulobacter vibrioides (strain ATCC 19089 / CIP 103742 / CB 15) (Caulobacter crescentus).